A 144-amino-acid polypeptide reads, in one-letter code: Cell division protein SepF (144 aa).

Positions 14–31 (EDDEMNEVPYTESEEQQE) are enriched in acidic residues. Residues 14–41 (EDDEMNEVPYTESEEQQEEIPQTQKNER) are disordered.

Belongs to the SepF family. As to quaternary structure, homodimer. Interacts with FtsZ.

It localises to the cytoplasm. Cell division protein that is part of the divisome complex and is recruited early to the Z-ring. Probably stimulates Z-ring formation, perhaps through the cross-linking of FtsZ protofilaments. Its function overlaps with FtsA. In Lactobacillus johnsonii (strain CNCM I-12250 / La1 / NCC 533), this protein is Cell division protein SepF.